A 422-amino-acid polypeptide reads, in one-letter code: Testin (422 aa).

A PET domain is found at 92–199 (MILTNPVPAK…GDVKLPSEMD (108 aa)). Disordered regions lie at residues 135 to 162 (QPVA…QDPS) and 194 to 226 (LPSE…EDKS). Basic and acidic residues predominate over residues 194–212 (LPSEMDVKPGDRSSLDGGD). 3 LIM zinc-binding domains span residues 234–297 (YSCY…CDSE), 299–359 (PRCA…NHAV), and 362–422 (QGCH…MMMS).

Belongs to the prickle / espinas / testin family. Interacts via LIM domain 1 with ZYX. Interacts (via LIM domain 3) with ENAH and VASP. Interacts with ALKBH4, talin, actin, alpha-actinin, GRIP1 and PXN. Interacts (via LIM domain 2) with ACTL7A (via N-terminus). Heterodimer with ACTL7A; the heterodimer interacts with ENAH to form a heterotrimer.

Its subcellular location is the cytoplasm. The protein localises to the cell junction. It localises to the focal adhesion. Its function is as follows. Scaffold protein that may play a role in cell adhesion, cell spreading and in the reorganization of the actin cytoskeleton. Plays a role in the regulation of cell proliferation. May act as a tumor suppressor. This chain is Testin (TES), found in Monodelphis domestica (Gray short-tailed opossum).